The following is a 750-amino-acid chain: MEYTHQYSWIIPFIPFPVPMLIGVGLLLFPTATKYLRRMWAFPSILLLTIVMMFSLDLSIHQINNSSFYQYVWSWTINNDLSLEFGYLIDSLTSIMSILITTVGILVLIYSDNYMSHDQGYLRFFAYLTLFNISMLGLVTSSNLIQIYVFWELVGMCSYLLIGFWFTRPIAANACQKAFVTNRVGDFGLLLGILGLYWITGSLEFRDLFQIINNLIYKNEVNIFFLTLVALLLFCGSVAKSAQFPLHVWLPDAMEGPTPISALIHAATMVAAGIFLVARLLPLFIVLPAIMNGIAFIGIITVVLGATLAIAQQDIKKNLAYSTMSQLGYMMLALGMGSYRAALFHLITHAYSKALLFLGSGSIIHSMEALVGYSPAKSQNMVLMGGLTKHVPITKTSFLVGTLSLCGIPPFACFWSKDEILNDSWLYSPIFAIIACCTAGLTAFYMFRIYLLVFEGYLNVHFLNFNGKKNSSFYSISLWGKKEVKQKLKNKNFFLALLRMKNNEMTSFFIRKIYPHRINQNVKNITCLFFDINYFGTKKTACLYPNESDNTMRFSILVLVLFTLFVGTIGISFSYKGIDFDILSKWLIPFIDLLHKNSKNFVDWYEFLTNAAFSVILTFLGIFIASFFYKPVYSDLQNLNLLNLFEKNVLNKKVADYFQNVIYDWSYNRGYIDVFYDISLITSVRKLVQFNYFFDKKIIDAIPNGIGITSFFMGEAIKYVGGGRISSYILLYIFYIVIFILIWYFLFTNI.

A run of 16 helical transmembrane segments spans residues W9 to F29, W40 to I60, I89 to I109, F125 to I145, I147 to T167, G185 to F205, N219 to A239, T258 to A278, L280 to I300, L327 to I347, A354 to S374, T396 to S416, W425 to Y445, F554 to S574, F607 to F627, and Y728 to T748.

The protein belongs to the complex I subunit 5 family. NDH is composed of at least 16 different subunits, 5 of which are encoded in the nucleus.

It localises to the plastid. It is found in the chloroplast thylakoid membrane. The enzyme catalyses a plastoquinone + NADH + (n+1) H(+)(in) = a plastoquinol + NAD(+) + n H(+)(out). It catalyses the reaction a plastoquinone + NADPH + (n+1) H(+)(in) = a plastoquinol + NADP(+) + n H(+)(out). Its function is as follows. NDH shuttles electrons from NAD(P)H:plastoquinone, via FMN and iron-sulfur (Fe-S) centers, to quinones in the photosynthetic chain and possibly in a chloroplast respiratory chain. The immediate electron acceptor for the enzyme in this species is believed to be plastoquinone. Couples the redox reaction to proton translocation, and thus conserves the redox energy in a proton gradient. The protein is NAD(P)H-quinone oxidoreductase subunit 5, chloroplastic (ndhF) of Glycine max (Soybean).